Reading from the N-terminus, the 208-residue chain is FMN-dependent NADH:quinone oxidoreductase 3 (208 aa).

Belongs to the azoreductase type 1 family. In terms of assembly, homodimer. It depends on FMN as a cofactor.

It catalyses the reaction 2 a quinone + NADH + H(+) = 2 a 1,4-benzosemiquinone + NAD(+). The enzyme catalyses N,N-dimethyl-1,4-phenylenediamine + anthranilate + 2 NAD(+) = 2-(4-dimethylaminophenyl)diazenylbenzoate + 2 NADH + 2 H(+). Its function is as follows. Quinone reductase that provides resistance to thiol-specific stress caused by electrophilic quinones. Functionally, also exhibits azoreductase activity. Catalyzes the reductive cleavage of the azo bond in aromatic azo compounds to the corresponding amines. The protein is FMN-dependent NADH:quinone oxidoreductase 3 of Bacillus cereus (strain ATCC 14579 / DSM 31 / CCUG 7414 / JCM 2152 / NBRC 15305 / NCIMB 9373 / NCTC 2599 / NRRL B-3711).